Reading from the N-terminus, the 236-residue chain is Small ribosomal subunit protein uS3 (236 aa).

Residues 39–107 (VREFLKKSLS…PAQISITEIK (69 aa)) enclose the KH type-2 domain.

This sequence belongs to the universal ribosomal protein uS3 family. In terms of assembly, part of the 30S ribosomal subunit. Forms a tight complex with proteins S10 and S14.

Its function is as follows. Binds the lower part of the 30S subunit head. Binds mRNA in the 70S ribosome, positioning it for translation. This is Small ribosomal subunit protein uS3 from Wigglesworthia glossinidia brevipalpis.